We begin with the raw amino-acid sequence, 358 residues long: DNA polymerase IV (358 aa).

In terms of domain architecture, UmuC spans 4 to 185 (IIHIDMDCYF…LSLRKIPGVG (182 aa)). Asp-8 and Asp-103 together coordinate Mg(2+). The active site involves Glu-104.

Belongs to the DNA polymerase type-Y family. As to quaternary structure, monomer. Requires Mg(2+) as cofactor.

It localises to the cytoplasm. It catalyses the reaction DNA(n) + a 2'-deoxyribonucleoside 5'-triphosphate = DNA(n+1) + diphosphate. Functionally, poorly processive, error-prone DNA polymerase involved in untargeted mutagenesis. Copies undamaged DNA at stalled replication forks, which arise in vivo from mismatched or misaligned primer ends. These misaligned primers can be extended by PolIV. Exhibits no 3'-5' exonuclease (proofreading) activity. May be involved in translesional synthesis, in conjunction with the beta clamp from PolIII. This chain is DNA polymerase IV, found in Shewanella sp. (strain W3-18-1).